A 65-amino-acid chain; its full sequence is Small ribosomal subunit protein bS21 (65 aa).

The tract at residues 45–65 is disordered; sequence GRLKRSRSRRRAQRANEERNS. Residues 48-57 are compositionally biased toward basic residues; sequence KRSRSRRRAQ.

Belongs to the bacterial ribosomal protein bS21 family.

This is Small ribosomal subunit protein bS21 from Pelodictyon phaeoclathratiforme (strain DSM 5477 / BU-1).